The sequence spans 139 residues: MLPLSLLKTAQNHPMLVELKNGETYNGHLVSCDNWMNINLREVICTSRDGDKFWRMPECYIRGSTIKYLRIPDEIIDMVKEEVVAKGRGRGGLQQQKQQKGRGMGGAGRGVFGGRGRGGIPGTGRGQPEKKPGRQAGKQ.

Met1 carries the N-acetylmethionine modification. In terms of domain architecture, Sm spans 2–75 (LPLSLLKTAQ…IKYLRIPDEI (74 aa)). Lys80 is covalently cross-linked (Glycyl lysine isopeptide (Lys-Gly) (interchain with G-Cter in SUMO2)). Residues 87–139 (GRGRGGLQQQKQQKGRGMGGAGRGVFGGRGRGGIPGTGRGQPEKKPGRQAGKQ) are disordered. Residues 102 to 125 (RGMGGAGRGVFGGRGRGGIPGTGR) are compositionally biased toward gly residues.

This sequence belongs to the snRNP Sm proteins family. As to quaternary structure, component of the precatalytic spliceosome (spliceosome B complex). Component of the U4/U6-U5 tri-snRNP complex, a building block of the precatalytic spliceosome (spliceosome B complex). The U4/U6-U5 tri-snRNP complex is composed of the U4, U6 and U5 snRNAs and at least PRPF3, PRPF4, PRPF6, PRPF8, PRPF31, SNRNP200, TXNL4A, SNRNP40, SNRPB, SNRPD1, SNRPD2, SNRPD3, SNRPE, SNRPF, SNRPG, DDX23, CD2BP2, PPIH, SNU13, EFTUD2, SART1 and USP39, plus LSM2, LSM3, LSM4, LSM5, LSM6, LSM7 and LSM8. LSM2, LSM3, LSM4, LSM5, LSM6, LSM7 and LSM8 form a heptameric, ring-shaped subcomplex (the LSM2-8 complex) that is part of the U4/U6-U5 tri-snRNP complex and the precatalytic spliceosome.

Its subcellular location is the nucleus. Its function is as follows. Plays a role in pre-mRNA splicing as component of the U4/U6-U5 tri-snRNP complex that is involved in spliceosome assembly, and as component of the precatalytic spliceosome (spliceosome B complex). The heptameric LSM2-8 complex binds specifically to the 3'-terminal U-tract of U6 snRNA. The chain is U6 snRNA-associated Sm-like protein LSm4 (LSM4) from Bos taurus (Bovine).